Here is a 149-residue protein sequence, read N- to C-terminus: UPF0208 membrane protein VSAL_I2111 (149 aa).

Helical transmembrane passes span 41–61 (FAVK…MVFN) and 69–89 (SIII…WLGN).

Belongs to the UPF0208 family.

It localises to the cell inner membrane. This chain is UPF0208 membrane protein VSAL_I2111, found in Aliivibrio salmonicida (strain LFI1238) (Vibrio salmonicida (strain LFI1238)).